The chain runs to 1109 residues: Ankyrin repeat- and BTB/POZ domain-containing protein 3 (1109 aa).

A helical transmembrane segment spans residues 168 to 188 (IVLSWGLAAHCTAAALAALSL). Residues 260–302 (SCSGPGPGSSSGSGPGPGSGPGAPAADKERETPGGGAASGGPC) form a disordered region. The segment covering 264–280 (PGPGSSSGSGPGPGSGP) has biased composition (gly residues). 5 ANK repeats span residues 608 to 637 (QGMTPLMYACVRGDEAMVQMLLDAGADLNV), 654 to 683 (RHWTALTFAVLHGHIPVVQLLLDAGAKVEG), 692 to 721 (YSETPLQLAAAVGNFELVSLLLERGADPLI), 735 to 764 (GDMNSFSQAAAHGHRNVFRKLLAQPEKEKS), and 830 to 859 (TWLESLRIAFQQHRRPLIQCLLKEFKTIQE). One can recognise a BTB domain in the interval 928-994 (SDVTFLVEGR…LYYGGPESLL (67 aa)).

It is found in the membrane. The sequence is that of Ankyrin repeat- and BTB/POZ domain-containing protein 3 (Abtb3) from Mus musculus (Mouse).